A 271-amino-acid chain; its full sequence is Phosphonoacetaldehyde hydrolase (271 aa).

Residue Asp12 is the Nucleophile of the active site. Mg(2+)-binding residues include Asp12 and Ala14. Lys54 acts as the Schiff-base intermediate with substrate in catalysis. Asp188 is a Mg(2+) binding site.

The protein belongs to the HAD-like hydrolase superfamily. PhnX family. As to quaternary structure, homodimer. Requires Mg(2+) as cofactor.

It carries out the reaction phosphonoacetaldehyde + H2O = acetaldehyde + phosphate + H(+). Its function is as follows. Involved in phosphonate degradation. This is Phosphonoacetaldehyde hydrolase from Vibrio parahaemolyticus serotype O3:K6 (strain RIMD 2210633).